The sequence spans 526 residues: Peptide chain release factor 3 (526 aa).

In terms of domain architecture, tr-type G spans 9-277 (DKRRTFAIIS…GIVEWAPIPQ (269 aa)). Residues 18 to 25 (SHPDAGKT), 86 to 90 (DTPGH), and 140 to 143 (NKLD) each bind GTP.

This sequence belongs to the TRAFAC class translation factor GTPase superfamily. Classic translation factor GTPase family. PrfC subfamily.

The protein resides in the cytoplasm. Its function is as follows. Increases the formation of ribosomal termination complexes and stimulates activities of RF-1 and RF-2. It binds guanine nucleotides and has strong preference for UGA stop codons. It may interact directly with the ribosome. The stimulation of RF-1 and RF-2 is significantly reduced by GTP and GDP, but not by GMP. The protein is Peptide chain release factor 3 of Shewanella halifaxensis (strain HAW-EB4).